A 466-amino-acid chain; its full sequence is MKNLVIFAFLFLSITTVINGGITSKFVRQALPSIEMSLDTFPSPGGYNTPEQVHLTQGDHDGRGMIVSWVTPLNLAGSNVVTYWIATNGSDVKPAKKRAHASTKSYRFYDYSSGFLHHATIKGLEYDTKYIYEVGTDKSVRQFSFTTPPKIGPDVPYTFGIIGDLGQTYASNETLYHYMSNPKGQAVLFAGDLSYADDHPNHDQRKWDTWGRFMEPCAAYQPFIFAAGNHEIDFVPNIGEPHAFKPYTHRYPNAYKASQSTSPLWYSVRRASAHIIVLSSYSAYGKYTPQYIWLEQELKNVNREETPWLIVIVHSPWYNSNNYHYMEGESMRVMFESWLVNSKVDLVLSGHVHAYERSERISNIKYNITNGLSSPVKDPNAPIYITIGDGGNIEGIANSFVDPQPSYSAYREASFGHAVLEIMNRTHAQYTWHRNQDNEPVAADSIMLHNRHFFPVEEIVSSNIRA.

Positions 1-20 (MKNLVIFAFLFLSITTVING) are cleaved as a signal peptide. Asn88 carries an N-linked (GlcNAc...) asparagine glycan. Asp164 is a Fe cation binding site. N-linked (GlcNAc...) asparagine glycosylation occurs at Asn172. Asp192 and Tyr195 together coordinate Fe cation. Residue Asp192 coordinates Zn(2+). Positions 229 and 314 each coordinate Zn(2+). A substrate-binding site is contributed by Asn229. His324 serves as the catalytic Proton donor. His351 contributes to the Zn(2+) binding site. A substrate-binding site is contributed by 351-353 (HVH). Residue His353 participates in Fe cation binding. 2 N-linked (GlcNAc...) asparagine glycosylation sites follow: Asn367 and Asn424.

It belongs to the metallophosphoesterase superfamily. Purple acid phosphatase family. In terms of assembly, homodimer. Fe cation is required as a cofactor. The cofactor is Zn(2+). Specifically expressed in flowers.

Its subcellular location is the secreted. It catalyses the reaction a phosphate monoester + H2O = an alcohol + phosphate. The polypeptide is Purple acid phosphatase 6 (PAP6) (Arabidopsis thaliana (Mouse-ear cress)).